We begin with the raw amino-acid sequence, 325 residues long: 2-oxoglutarate-dependent dioxygenase tropC (325 aa).

The region spanning 185–287 (PSIPMRLLHY…RYSVAFFLNG (103 aa)) is the Fe2OG dioxygenase domain. 3 residues coordinate Fe cation: His-210, Asp-212, and His-269. Arg-278 serves as a coordination point for 2-oxoglutarate.

It belongs to the iron/ascorbate-dependent oxidoreductase family. Fe(2+) is required as a cofactor.

The protein operates within secondary metabolite biosynthesis. Functionally, 2-oxoglutarate-dependent dioxygenase; part of the gene cluster that mediates the biosynthesis of the tropolone class of fungal maleic anhydrides. The pathway begins with the synthesis of 3-methylorcinaldehyde by the non-reducing polyketide synthase (PKS) tropA. 3-methylorcinaldehyde is the substrate for the FAD-dependent monooxygenase tropB to yield a dearomatized hydroxycyclohexadione. The 2-oxoglutarate-dependent dioxygenase tropC then performs the oxidative ring expansion to provide the first tropolone metabolite stipitaldehyde. Trop D converts stipitaldehyde into stipitacetal which is in turn converted to stipitalide by the short-chain dehydrogenase/reductase tropE. The next steps involve tropF, tropG, tropH, tropI and tropJ to form successive tropolone maleic anhydrides including stipitaldehydic, stipitatonic and stipitatic acids. This chain is 2-oxoglutarate-dependent dioxygenase tropC, found in Talaromyces stipitatus (strain ATCC 10500 / CBS 375.48 / QM 6759 / NRRL 1006) (Penicillium stipitatum).